Consider the following 350-residue polypeptide: Cyclin-O (350 aa).

Residues 1 to 89 (MVTPCPTSPS…GSPLPGPAQP (89 aa)) are disordered. Basic residues predominate over residues 28–42 (PVKKSRRPRLRRKQP). Residue Ser81 is modified to Phosphoserine.

This sequence belongs to the cyclin family. As to expression, present in respiratory cells (at protein level).

It is found in the cytoplasm. The protein localises to the nucleus. Its subcellular location is the nucleolus. In terms of biological role, specifically required for generation of multiciliated cells, possibly by promoting a cell cycle state compatible with centriole amplification and maturation. Acts downstream of MCIDAS to promote mother centriole amplification and maturation in preparation for apical docking. This is Cyclin-O from Homo sapiens (Human).